Consider the following 187-residue polypeptide: Resolvase OPG149 (187 aa).

Belongs to the RuvC family. Poxviruses-type subfamily. The cofactor is Mg(2+).

In terms of biological role, plays a role in DNA replication by cleaving viral DNA concatamers to yield unit-length viral genomes. The concatamer junctions contain inverted repeat sequences that can be extruded as cruciforms, yielding Holliday junctions that A22 protein cleaves. The chain is Resolvase OPG149 (OPG149) from Vaccinia virus (strain Western Reserve) (VACV).